The sequence spans 148 residues: Protein PLANT CADMIUM RESISTANCE 9 (148 aa).

The helical transmembrane segment at 59–78 (LAGLMVVAMSSIGCGWYYAS) threads the bilayer.

The protein belongs to the cornifelin family.

The protein localises to the membrane. Functionally, may be involved in cadmium resistance. This chain is Protein PLANT CADMIUM RESISTANCE 9 (PCR9), found in Arabidopsis thaliana (Mouse-ear cress).